We begin with the raw amino-acid sequence, 58 residues long: DNA-directed RNA polymerases I, II, and III subunit RPABC4 (58 aa).

4 residues coordinate Zn(2+): Cys19, Cys22, Cys36, and Cys39. The C4-type zinc finger occupies 19-39 (CGECHTENEIKSRDPIRCREC).

It belongs to the archaeal Rpo12/eukaryotic RPC10 RNA polymerase subunit family. As to quaternary structure, component of the RNA polymerase I (Pol I), RNA polymerase II (Pol II) and RNA polymerase III (Pol III) complexes consisting of at least 13, 12 and 17 subunits, respectively. Pol I complex consists of a ten-subunit catalytic core composed of POLR1A/RPA1, POLR1B/RPA2, POLR1C/RPAC1, POLR1D/RPAC2, POLR1H/RPA12, POLR2E/RPABC1, POLR2F/RPABC2, POLR2H/RPABC3, POLR2K/RPABC4 and POLR2L/RPABC5; a mobile stalk subunit POLR1F/RPA43 protruding from the core and additional subunits homologous to general transcription factors POLR1E/RPA49 and POLR1G/RPA34. Part of Pol I pre-initiation complex (PIC), in which Pol I core assembles with RRN3 and promoter-bound UTBF and SL1/TIF-IB complex. Pol II complex contains a ten-subunit catalytic core composed of POLR2A/RPB1, POLR2B/RPB2, POLR2C/RPB3, POLR2I/RPB9, POLR2J/RPB11, POLR2E/RPABC1, POLR2F/RPABC2, POLR2H/RPABC3, POLR2K/RPABC4 and POLR2L/RPABC5 and a mobile stalk composed of two subunits POLR2D/RPB4 and POLR2G/RPB7. Part of Pol II(G) complex, in which Pol II core associates with an additional subunit POLR2M; unlike conventional Pol II, Pol II(G) functions as a transcriptional repressor. Part of TBP-based Pol II pre-initiation complex (PIC), in which Pol II core assembles with general transcription factors and other specific initiation factors including GTF2E1, GTF2E2, GTF2F1, GTF2F2, TCEA1, ERCC2, ERCC3, GTF2H2, GTF2H3, GTF2H4, GTF2H5, GTF2A1, GTF2A2, GTF2B and TBP; this large multi-subunit PIC complex mediates DNA unwinding and targets Pol II core to the transcription start site where the first phosphodiester bond forms. Pol III complex consists of a ten-subunit catalytic core composed of POLR3A/RPC1, POLR3B/RPC2, POLR1C/RPAC1, POLR1D/RPAC2, POLR3K/RPC10, POLR2E/RPABC1, POLR2F/RPABC2, POLR2H/RPABC3, POLR2K/RPABC4 and POLR2L/RPABC5; a mobile stalk composed of two subunits POLR3H/RPC8 and CRCP/RPC9, protruding from the core and functioning primarily in transcription initiation; and additional subunits homologous to general transcription factors of the RNA polymerase II machinery, POLR3C/RPC3-POLR3F/RPC6-POLR3G/RPC7 heterotrimer required for transcription initiation and POLR3D/RPC4-POLR3E/RPC5 heterodimer involved in both transcription initiation and termination.

The protein localises to the nucleus. It localises to the nucleolus. Its function is as follows. DNA-dependent RNA polymerase catalyzes the transcription of DNA into RNA using the four ribonucleoside triphosphates as substrates. Common component of RNA polymerases I, II and III which synthesize ribosomal RNA precursors, mRNA precursors and many functional non-coding RNAs, and a small RNAs, such as 5S rRNA and tRNAs, respectively. This Mus musculus (Mouse) protein is DNA-directed RNA polymerases I, II, and III subunit RPABC4 (Polr2k).